A 122-amino-acid polypeptide reads, in one-letter code: Large ribosomal subunit protein uL14 (122 aa).

This sequence belongs to the universal ribosomal protein uL14 family. Part of the 50S ribosomal subunit. Forms a cluster with proteins L3 and L19. In the 70S ribosome, L14 and L19 interact and together make contacts with the 16S rRNA in bridges B5 and B8.

Binds to 23S rRNA. Forms part of two intersubunit bridges in the 70S ribosome. The chain is Large ribosomal subunit protein uL14 from Borrelia hermsii (strain HS1 / DAH).